A 414-amino-acid chain; its full sequence is Histidine--tRNA ligase (414 aa).

This sequence belongs to the class-II aminoacyl-tRNA synthetase family. Homodimer.

The protein resides in the cytoplasm. It carries out the reaction tRNA(His) + L-histidine + ATP = L-histidyl-tRNA(His) + AMP + diphosphate + H(+). In Mycoplasma pneumoniae (strain ATCC 29342 / M129 / Subtype 1) (Mycoplasmoides pneumoniae), this protein is Histidine--tRNA ligase (hisS).